Reading from the N-terminus, the 408-residue chain is 3-phosphoshikimate 1-carboxyvinyltransferase (408 aa).

Residues Lys-10, Ser-11, and Arg-15 each coordinate 3-phosphoshikimate. Position 10 (Lys-10) interacts with phosphoenolpyruvate. Gly-79 and Arg-107 together coordinate phosphoenolpyruvate. Residues Ser-150, Ser-151, Gln-152, Ser-179, Glu-297, and His-324 each contribute to the 3-phosphoshikimate site. A phosphoenolpyruvate-binding site is contributed by Gln-152. Glu-297 acts as the Proton acceptor in catalysis. Arg-328, Arg-369, and Lys-394 together coordinate phosphoenolpyruvate.

Belongs to the EPSP synthase family. As to quaternary structure, monomer.

The protein resides in the cytoplasm. It carries out the reaction 3-phosphoshikimate + phosphoenolpyruvate = 5-O-(1-carboxyvinyl)-3-phosphoshikimate + phosphate. It participates in metabolic intermediate biosynthesis; chorismate biosynthesis; chorismate from D-erythrose 4-phosphate and phosphoenolpyruvate: step 6/7. Its function is as follows. Catalyzes the transfer of the enolpyruvyl moiety of phosphoenolpyruvate (PEP) to the 5-hydroxyl of shikimate-3-phosphate (S3P) to produce enolpyruvyl shikimate-3-phosphate and inorganic phosphate. The sequence is that of 3-phosphoshikimate 1-carboxyvinyltransferase from Corynebacterium efficiens (strain DSM 44549 / YS-314 / AJ 12310 / JCM 11189 / NBRC 100395).